We begin with the raw amino-acid sequence, 459 residues long: Argininosuccinate lyase (459 aa).

This sequence belongs to the lyase 1 family. Argininosuccinate lyase subfamily.

It is found in the cytoplasm. It carries out the reaction 2-(N(omega)-L-arginino)succinate = fumarate + L-arginine. It participates in amino-acid biosynthesis; L-arginine biosynthesis; L-arginine from L-ornithine and carbamoyl phosphate: step 3/3. The protein is Argininosuccinate lyase of Prochlorococcus marinus (strain MIT 9515).